We begin with the raw amino-acid sequence, 1487 residues long: Golgin subfamily A member 3 (1487 aa).

At Met-1 the chain carries N-acetylmethionine. The segment at 1 to 118 (MDGASAKQDG…GTSAEGSVRK (118 aa)) is disordered. Residues Ser-18 and Ser-60 each carry the phosphoserine modification. Polar residues predominate over residues 62–74 (DRSSQVAICQNGQ). Residues 121–141 (LQSLRLSLPMQETQLCSTASS) form an interaction with GOPC region. The interval 172-257 (ERSSQPATKM…DYRTEDPSDS (86 aa)) is golgi-targeting domain. Disordered stretches follow at residues 221–321 (PKVG…SSLS) and 365–394 (AAQH…SMES). Low complexity-rich tracts occupy residues 269-288 (SSLK…SPSS), 312-321 (SDSSSHSSLS), and 365-375 (AAQHQDQNQEA). Ser-270 is subject to Phosphoserine. A coiled-coil region spans residues 358-1454 (KDVLQAAAAQ…TITVHESLSS (1097 aa)). Phosphoserine is present on residues Ser-381, Ser-385, and Ser-461. The span at 785 to 796 (KEELDRGARRLE) shows a compositional bias: basic and acidic residues. Residues 785–804 (KEELDRGARRLEEDTEETSG) form a disordered region. Ser-979 carries the post-translational modification Phosphoserine. The span at 1372–1382 (RGAAKKKEPKG) shows a compositional bias: basic and acidic residues. 2 disordered regions span residues 1372–1396 (RGAA…IKIP) and 1458–1487 (VEAA…GLGQ). Ser-1387 is modified (phosphoserine). Basic and acidic residues predominate over residues 1462–1474 (PAEHAHPRGDTKL). Ser-1479 bears the Phosphoserine mark.

As to quaternary structure, homodimer. Interacts with GOLGA7. Interacts with GOPC. Post-translationally, cleaved by caspases in apoptotic cells. In terms of tissue distribution, highly expressed in testis. Transcripts can be found in spermatids during spermatogenesis. No expression in Leydig cells, spermatogonia or spermatocytes. Detected at low levels in all tissues.

The protein resides in the cytoplasm. Its subcellular location is the golgi apparatus. It localises to the golgi stack membrane. Its function is as follows. Plays an important role in spermatogenesis and/or testis development. Probably identical with the serologically detectable male antigen (SDM). Probably involved in maintaining Golgi structure. The polypeptide is Golgin subfamily A member 3 (Golga3) (Mus musculus (Mouse)).